A 234-amino-acid polypeptide reads, in one-letter code: Fibronectin type III domain-containing protein 4 (234 aa).

Residues 1–44 form the signal peptide; that stretch reads MPSGCHSSPPSGLRGDMASLVPLSPYLSPTVLLLVSCDLGFVRA. At 45–167 the chain is on the extracellular side; it reads DRPPSPVNVT…GLDGERPLQT (123 aa). The 94-residue stretch at 47 to 140 folds into the Fibronectin type-III domain; sequence PPSPVNVTVT…PRVHFRTLKG (94 aa). N-linked (GlcNAc...) asparagine glycosylation is found at Asn52, Asn97, and Asn147. The interval 122-160 is disordered; the sequence is GLRGESPPGPRVHFRTLKGSDRLPSNSSSPGDITVEGLD. A helical membrane pass occupies residues 168–188; that stretch reads GEVVIIVVVLLMWAAVIGLFC. The Cytoplasmic portion of the chain corresponds to 189-234; sequence RQYDIIKDNDSNNNPKEKGKGPEQSPQGRPVGTRQKKSPSINTIDV. Residues 197 to 209 show a composition bias toward basic and acidic residues; that stretch reads NDSNNNPKEKGKG. The disordered stretch occupies residues 197–234; it reads NDSNNNPKEKGKGPEQSPQGRPVGTRQKKSPSINTIDV.

In terms of tissue distribution, highly expressed in the liver and the brain, including in the cortex, hypothalamus and hippocampus. Also expressed in adipose tissue.

Its subcellular location is the membrane. It is found in the secreted. Its function is as follows. Has anti-inflammatory properties. In the colon, acts on macrophages to down-regulate inflammation. May suppress osteoclastogenesis and mature osteoclast resorptive function. In white adipose tissue, decreases local inflammation, via interaction with GPR116. Also required for proper systemic glucose tolerance, specifically sensitizing white adipocytes to insulin and promoting glucose uptake. The insulin sensitizing function in adipose tissue is mediated by interaction with ADGRF5/GPR116 and activation of cAMP signaling. This chain is Fibronectin type III domain-containing protein 4 (FNDC4), found in Homo sapiens (Human).